We begin with the raw amino-acid sequence, 32 residues long: Tail virion protein G9P (32 aa).

A helical transmembrane segment spans residues 8 to 24 (FASFVLGWCLRSGITYF).

Belongs to the inovirus G9P protein family.

Its subcellular location is the virion. The protein resides in the host membrane. In terms of biological role, may initiate with G7P the virion concomitant assembly-budding process, by interacting with the packaging signal of the viral genome. The assembly-budding takes place at the host inner membrane. In turn, G7P and G9P are present at the end of the filamentous virion that emerges first from the bacterial host. In Escherichia coli (Bacteriophage f1), this protein is Tail virion protein G9P (IX).